The chain runs to 145 residues: Ribonuclease P protein component (145 aa).

Over residues 120-130 (LPAAPGTMPPA) the composition is skewed to low complexity. A disordered region spans residues 120 to 145 (LPAAPGTMPPARTMHPSSLSPTEPDL). The segment covering 134–145 (HPSSLSPTEPDL) has biased composition (polar residues).

This sequence belongs to the RnpA family. Consists of a catalytic RNA component (M1 or rnpB) and a protein subunit.

The catalysed reaction is Endonucleolytic cleavage of RNA, removing 5'-extranucleotides from tRNA precursor.. Its function is as follows. RNaseP catalyzes the removal of the 5'-leader sequence from pre-tRNA to produce the mature 5'-terminus. It can also cleave other RNA substrates such as 4.5S RNA. The protein component plays an auxiliary but essential role in vivo by binding to the 5'-leader sequence and broadening the substrate specificity of the ribozyme. This is Ribonuclease P protein component from Xanthomonas oryzae pv. oryzae (strain MAFF 311018).